Consider the following 138-residue polypeptide: Basic phospholipase A2 homolog acutohaemolysin (138 aa).

An N-terminal signal peptide occupies residues 1 to 16 (MRALWIVAVLLVGVEG). 7 disulfides stabilise this stretch: Cys-42-Cys-131, Cys-44-Cys-60, Cys-59-Cys-111, Cys-65-Cys-138, Cys-66-Cys-104, Cys-73-Cys-97, and Cys-91-Cys-102. The segment at 121–133 (KSFRYHLKPSCKK) is important for membrane-damaging activities in eukaryotes and bacteria; heparin-binding.

In terms of assembly, monomer. Expressed by the venom gland.

It is found in the secreted. Snake venom phospholipase A2 homolog that lacks enzymatic activity. Is myotoxic. Has a strong indirect hemolytic activity and anticoagulant activity. A model of myotoxic mechanism has been proposed: an apo Lys49-PLA2 is activated by the entrance of a hydrophobic molecule (e.g. fatty acid) at the hydrophobic channel of the protein leading to a reorientation of a monomer. This reorientation causes a transition between 'inactive' to 'active' states, causing alignment of C-terminal and membrane-docking sites (MDoS) side-by-side and putting the membrane-disruption sites (MDiS) in the same plane, exposed to solvent and in a symmetric position for both monomers. The MDoS region stabilizes the toxin on membrane by the interaction of charged residues with phospholipid head groups. Subsequently, the MDiS region destabilizes the membrane with penetration of hydrophobic residues. This insertion causes a disorganization of the membrane, allowing an uncontrolled influx of ions (i.e. calcium and sodium), and eventually triggering irreversible intracellular alterations and cell death. This chain is Basic phospholipase A2 homolog acutohaemolysin, found in Deinagkistrodon acutus (Hundred-pace snake).